Reading from the N-terminus, the 125-residue chain is Histone H2A (125 aa).

Residues 1-18 show a composition bias toward basic residues; sequence MSGRGKGGKARAKAKSRS. Residues 1–21 are disordered; that stretch reads MSGRGKGGKARAKAKSRSSRA. N-acetylserine is present on Ser-2. At Ser-2 the chain carries Phosphoserine. Gln-104 carries the N5-methylglutamine modification.

Belongs to the histone H2A family. The nucleosome is a histone octamer containing two molecules each of H2A, H2B, H3 and H4 assembled in one H3-H4 heterotetramer and two H2A-H2B heterodimers. The octamer wraps approximately 147 bp of DNA.

The protein resides in the nucleus. The protein localises to the chromosome. Core component of nucleosome. Nucleosomes wrap and compact DNA into chromatin, limiting DNA accessibility to the cellular machineries which require DNA as a template. Histones thereby play a central role in transcription regulation, DNA repair, DNA replication and chromosomal stability. DNA accessibility is regulated via a complex set of post-translational modifications of histones, also called histone code, and nucleosome remodeling. This is Histone H2A from Asterias rubens (Common European starfish).